Reading from the N-terminus, the 1036-residue chain is Lethal(2) giant larvae protein homolog 1 (1036 aa).

10 WD repeats span residues 38–71 (SALA…FTGL), 78–119 (VTQM…GLSF), 139–175 (VTVV…GQTL), 199–233 (SLQG…EHVF), 239–271 (LESL…GSPP), 289–331 (AINK…ETLV), 339–373 (VIDF…VLDL), 395–473 (TCSA…YKLS), 517–592 (QKVA…RVLI), and 601–662 (TAVA…LRQS). Serine 662 bears the Phosphoserine mark. The tract at residues 670–694 (RVSGKKRATTASSKLQEANAQLAEQ) is disordered. The span at 678-693 (TTASSKLQEANAQLAE) shows a compositional bias: polar residues. WD repeat units follow at residues 722 to 782 (VRCL…KEVQ), 791 to 843 (AIAV…VSAK), 848 to 901 (LTAH…VHYS), and 915 to 938 (VFTR…SLSA). Residue threonine 957 is modified to Phosphothreonine. Phosphoserine occurs at positions 964, 982, and 989. The segment at 980–1002 (PESCEGSPSSAHSKRADTMEPPE) is disordered.

Belongs to the WD repeat L(2)GL family. In terms of assembly, associated with nonmuscle myosin II heavy chain. Interacts with PRKCI/aPKC, PARD6B/Par-6 and PARD6A. Interacts with STX4A. Interacts with DCAF1. Interacts with RAB10 (GDP-bound form); the interaction is direct and promotes RAB10 association with membranes and activation through competition with the Rab inhibitor GDI1. Phosphorylated by PRKCI. Expressed at high level in the testis and at lower level in ovary, brain, spleen and kidney.

The protein resides in the early endosome membrane. It localises to the golgi apparatus. It is found in the trans-Golgi network membrane. The protein localises to the golgi apparatus membrane. Its subcellular location is the cell projection. The protein resides in the axon. It localises to the cytoplasm. It is found in the cytoskeleton. In terms of biological role, cortical cytoskeleton protein found in a complex involved in maintaining cell polarity and epithelial integrity. Involved in the regulation of mitotic spindle orientation, proliferation, differentiation and tissue organization of neuroepithelial cells. Involved in axonogenesis through RAB10 activation thereby regulating vesicular membrane trafficking toward the axonal plasma membrane. The protein is Lethal(2) giant larvae protein homolog 1 (Llgl1) of Rattus norvegicus (Rat).